The primary structure comprises 617 residues: Serine/threonine-protein kinase par-4 (617 aa).

Positions 1-11 (MDAPSTSSGAQ) are enriched in polar residues. The disordered stretch occupies residues 1–59 (MDAPSTSSGAQSKLLMPGDDEADEDHQNRGDPNLQQKQKIQLNVDPDYDDDEDDDCFID). Residues 46–57 (PDYDDDEDDDCF) are compositionally biased toward acidic residues. Positions 183–446 (YMWGGQIGTG…CLETMIHPWF (264 aa)) constitute a Protein kinase domain. ATP contacts are provided by residues 189 to 197 (IGTGSYGKV) and K212. D310 (proton acceptor) is an active-site residue. Residues 523 to 617 (LEAKPGDGPD…CIFRSRTDSA (95 aa)) are disordered. Pro residues predominate over residues 587 to 597 (DPPPTAAPGAP).

This sequence belongs to the protein kinase superfamily. CAMK Ser/Thr protein kinase family. LKB1 subfamily. In terms of assembly, interacts with strd-1. It depends on Mg(2+) as a cofactor. Mn(2+) is required as a cofactor. In terms of tissue distribution, expressed in the gonads, oocytes and early embryos (at protein level).

It localises to the cytoplasm. The protein resides in the cell cortex. The enzyme catalyses L-seryl-[protein] + ATP = O-phospho-L-seryl-[protein] + ADP + H(+). It carries out the reaction L-threonyl-[protein] + ATP = O-phospho-L-threonyl-[protein] + ADP + H(+). Its function is as follows. Required for cytoplasmic partitioning and asymmetric cell division in early embryogenesis. Controls the asymmetric cell division of the Q.p neuroblast lineage. Involved in mediating cell polarization via regulation of anillin family scaffold proteins. Phosphorylates and restricts the asymmetry effectors mex-5 and mex-6 to the anterior cytoplasm of the zygote and maintains these phosphorylations until fertilization. May phosphorylate par-1. Required for strd-1 localization to the cell cortex of early embryos and may be required for strd-1 protein stabilization. May regulate the integrity of the early embryonic cortex in a strd-1-dependent manner. Phosphorylates and regulates aak-2 in response to oxidative stress and during dauer development. May also play a role in motility, behavioral response, regulation of lifespan and dauer formation through this pathway. Required to establish germline stem cell (GSC) quiescence during dauer development. Acts downstream of unc-40 in dendrite outgrowth. May play a role in cell shedding during embryogenesis, probably by phosphorylating pig-1. The protein is Serine/threonine-protein kinase par-4 (par-4) of Caenorhabditis elegans.